Reading from the N-terminus, the 571-residue chain is Dehydrocurvularin exporter (571 aa).

Positions 1–34 (MADGSDLENNHKPELDRSQPGSTSNGSQEQKDPD) are disordered. Residues 8-17 (ENNHKPELDR) are compositionally biased toward basic and acidic residues. Over residues 19-28 (QPGSTSNGSQ) the composition is skewed to polar residues. Residue Asn-25 is glycosylated (N-linked (GlcNAc...) asparagine). Helical transmembrane passes span 47 to 67 (ILVM…IGII), 86 to 106 (WYGS…GKLF), 120 to 140 (FIFL…SVII), 143 to 163 (AIQG…INYV), 171 to 191 (LLIG…PVIG), 202 to 222 (WCFW…LLFL), 238 to 258 (IILA…VCLT), 275 to 295 (VIAT…TEWF), 317 to 337 (LFCL…PIYF), 350 to 370 (VNTL…GGVI), 379 to 399 (FELL…ILDV), 405 to 425 (MYIG…QIPM), 443 to 463 (IMVM…QSLF), and 514 to 534 (VFAF…IIPF). The tract at residues 538 to 571 (PDHGKKDKPATEEAAEEKSEAEGKVSGDKEENHS) is disordered.

This sequence belongs to the major facilitator superfamily. TCR/Tet family.

The protein resides in the cell membrane. Its function is as follows. Efflux pump that is probably involved in the export of dehydrocurvularin. The chain is Dehydrocurvularin exporter from Aspergillus terreus.